Reading from the N-terminus, the 459-residue chain is tRNA modification GTPase MnmE (459 aa).

Positions 20, 85, and 124 each coordinate (6S)-5-formyl-5,6,7,8-tetrahydrofolate. Residues 221-380 (GISTVIIGRP…LEEAIQSLFF (160 aa)) enclose the TrmE-type G domain. Residue Asn-231 coordinates K(+). GTP-binding positions include 231–236 (NVGKSS), 250–256 (TDIPGTT), and 275–278 (DTAG). Ser-235 is a binding site for Mg(2+). Residues Thr-250, Ile-252, and Thr-255 each contribute to the K(+) site. Residue Thr-256 participates in Mg(2+) binding. Position 459 (Lys-459) interacts with (6S)-5-formyl-5,6,7,8-tetrahydrofolate.

Belongs to the TRAFAC class TrmE-Era-EngA-EngB-Septin-like GTPase superfamily. TrmE GTPase family. As to quaternary structure, homodimer. Heterotetramer of two MnmE and two MnmG subunits. It depends on K(+) as a cofactor.

It localises to the cytoplasm. Its function is as follows. Exhibits a very high intrinsic GTPase hydrolysis rate. Involved in the addition of a carboxymethylaminomethyl (cmnm) group at the wobble position (U34) of certain tRNAs, forming tRNA-cmnm(5)s(2)U34. This chain is tRNA modification GTPase MnmE, found in Bacillus licheniformis (strain ATCC 14580 / DSM 13 / JCM 2505 / CCUG 7422 / NBRC 12200 / NCIMB 9375 / NCTC 10341 / NRRL NRS-1264 / Gibson 46).